The sequence spans 369 residues: 3-isopropylmalate dehydrogenase (369 aa).

77–90 (GPKWDDLPFDKKPE) provides a ligand contact to NAD(+). Substrate-binding residues include arginine 97, arginine 107, arginine 135, and aspartate 226. Mg(2+) contacts are provided by aspartate 226, aspartate 250, and aspartate 254. Residue 289–301 (GSAPDIAGKDMAN) coordinates NAD(+).

Belongs to the isocitrate and isopropylmalate dehydrogenases family. LeuB type 1 subfamily. As to quaternary structure, homodimer. The cofactor is Mg(2+). It depends on Mn(2+) as a cofactor.

Its subcellular location is the cytoplasm. It carries out the reaction (2R,3S)-3-isopropylmalate + NAD(+) = 4-methyl-2-oxopentanoate + CO2 + NADH. It participates in amino-acid biosynthesis; L-leucine biosynthesis; L-leucine from 3-methyl-2-oxobutanoate: step 3/4. Catalyzes the oxidation of 3-carboxy-2-hydroxy-4-methylpentanoate (3-isopropylmalate) to 3-carboxy-4-methyl-2-oxopentanoate. The product decarboxylates to 4-methyl-2 oxopentanoate. The polypeptide is 3-isopropylmalate dehydrogenase (Paramagnetospirillum magneticum (strain ATCC 700264 / AMB-1) (Magnetospirillum magneticum)).